The primary structure comprises 434 residues: ATP-dependent RNA helicase uap56 (434 aa).

The interval 1–43 is disordered; that stretch reads MASAQEDLIDYEEEEELVQDQPAQEITPAADTAENGEKSDKKG. The span at 7-18 shows a compositional bias: acidic residues; that stretch reads DLIDYEEEEELV. The Q motif signature appears at 51–79; it reads TGFRDFLLKPELLRAITDSGFEHPSEVQQ. In terms of domain architecture, Helicase ATP-binding spans 82-257; that stretch reads IPQSILGTDV…KKFMQNPLEI (176 aa). Position 95–102 (95–102) interacts with ATP; the sequence is AKSGMGKT. Positions 204 to 207 match the DECD box motif; it reads DECD. The Helicase C-terminal domain occupies 269–430; the sequence is GLQQHYVKLE…ELPDEIDVGS (162 aa).

The protein belongs to the DEAD box helicase family. DECD subfamily. As to quaternary structure, interacts with mlo3 and rae1.

The protein resides in the nucleus. The enzyme catalyses ATP + H2O = ADP + phosphate + H(+). ATP-binding RNA helicase involved in transcription elongation and required for the export of mRNA out of the nucleus. SUB2 also plays a role in pre-mRNA splicing and spliceosome assembly. May be involved in rDNA and telomeric silencing, and maintenance of genome integrity. Links the mRNA adapter mlo3 to rae1 for targeting mRNA-protein complex to the proteins of the nucleoporin complex (NPC). This chain is ATP-dependent RNA helicase uap56 (uap56), found in Schizosaccharomyces pombe (strain 972 / ATCC 24843) (Fission yeast).